The following is a 261-amino-acid chain: Cytochrome c oxidase subunit 3 (261 aa).

Topologically, residues Met1–Pro15 are mitochondrial matrix. Residues Trp16–Trp34 traverse the membrane as a helical segment. The Mitochondrial intermembrane portion of the chain corresponds to Phe35–Met40. Residues Thr41–Thr66 form a helical membrane-spanning segment. The Mitochondrial matrix segment spans residues Phe67–Thr72. A helical membrane pass occupies residues Pro73 to Ser105. Residues Leu106–Glu128 lie on the Mitochondrial intermembrane side of the membrane. The helical transmembrane segment at Val129–Met152 threads the bilayer. The Mitochondrial matrix segment spans residues Glu153 to Asn155. Residues Arg156 to Glu183 traverse the membrane as a helical segment. The Mitochondrial intermembrane segment spans residues Ala184 to Asp190. A helical transmembrane segment spans residues Gly191–Leu223. At Lys224–His232 the chain is on the mitochondrial matrix side. The chain crosses the membrane as a helical span at residues Phe233–Ile256. The Mitochondrial intermembrane portion of the chain corresponds to Tyr257–Ser261.

It belongs to the cytochrome c oxidase subunit 3 family. Component of the cytochrome c oxidase (complex IV, CIV), a multisubunit enzyme composed of 14 subunits. The complex is composed of a catalytic core of 3 subunits MT-CO1, MT-CO2 and MT-CO3, encoded in the mitochondrial DNA, and 11 supernumerary subunits COX4I, COX5A, COX5B, COX6A, COX6B, COX6C, COX7A, COX7B, COX7C, COX8 and NDUFA4, which are encoded in the nuclear genome. The complex exists as a monomer or a dimer and forms supercomplexes (SCs) in the inner mitochondrial membrane with NADH-ubiquinone oxidoreductase (complex I, CI) and ubiquinol-cytochrome c oxidoreductase (cytochrome b-c1 complex, complex III, CIII), resulting in different assemblies (supercomplex SCI(1)III(2)IV(1) and megacomplex MCI(2)III(2)IV(2)).

It is found in the mitochondrion inner membrane. It carries out the reaction 4 Fe(II)-[cytochrome c] + O2 + 8 H(+)(in) = 4 Fe(III)-[cytochrome c] + 2 H2O + 4 H(+)(out). Its function is as follows. Component of the cytochrome c oxidase, the last enzyme in the mitochondrial electron transport chain which drives oxidative phosphorylation. The respiratory chain contains 3 multisubunit complexes succinate dehydrogenase (complex II, CII), ubiquinol-cytochrome c oxidoreductase (cytochrome b-c1 complex, complex III, CIII) and cytochrome c oxidase (complex IV, CIV), that cooperate to transfer electrons derived from NADH and succinate to molecular oxygen, creating an electrochemical gradient over the inner membrane that drives transmembrane transport and the ATP synthase. Cytochrome c oxidase is the component of the respiratory chain that catalyzes the reduction of oxygen to water. Electrons originating from reduced cytochrome c in the intermembrane space (IMS) are transferred via the dinuclear copper A center (CU(A)) of subunit 2 and heme A of subunit 1 to the active site in subunit 1, a binuclear center (BNC) formed by heme A3 and copper B (CU(B)). The BNC reduces molecular oxygen to 2 water molecules using 4 electrons from cytochrome c in the IMS and 4 protons from the mitochondrial matrix. The chain is Cytochrome c oxidase subunit 3 (MT-CO3) from Antidorcas marsupialis (Springbok).